The chain runs to 365 residues: UDP-N-acetylglucosamine--N-acetylmuramyl-(pentapeptide) pyrophosphoryl-undecaprenol N-acetylglucosamine transferase (365 aa).

UDP-N-acetyl-alpha-D-glucosamine is bound by residues 17–19, Asn-129, Arg-167, Ser-194, Ile-250, 269–274, and Gln-295; these read TGG and ALTVSE.

Belongs to the glycosyltransferase 28 family. MurG subfamily.

It is found in the cell inner membrane. The enzyme catalyses di-trans,octa-cis-undecaprenyl diphospho-N-acetyl-alpha-D-muramoyl-L-alanyl-D-glutamyl-meso-2,6-diaminopimeloyl-D-alanyl-D-alanine + UDP-N-acetyl-alpha-D-glucosamine = di-trans,octa-cis-undecaprenyl diphospho-[N-acetyl-alpha-D-glucosaminyl-(1-&gt;4)]-N-acetyl-alpha-D-muramoyl-L-alanyl-D-glutamyl-meso-2,6-diaminopimeloyl-D-alanyl-D-alanine + UDP + H(+). It functions in the pathway cell wall biogenesis; peptidoglycan biosynthesis. Cell wall formation. Catalyzes the transfer of a GlcNAc subunit on undecaprenyl-pyrophosphoryl-MurNAc-pentapeptide (lipid intermediate I) to form undecaprenyl-pyrophosphoryl-MurNAc-(pentapeptide)GlcNAc (lipid intermediate II). This chain is UDP-N-acetylglucosamine--N-acetylmuramyl-(pentapeptide) pyrophosphoryl-undecaprenol N-acetylglucosamine transferase, found in Shewanella violacea (strain JCM 10179 / CIP 106290 / LMG 19151 / DSS12).